The sequence spans 37 residues: Large ribosomal subunit protein bL36 (37 aa).

This sequence belongs to the bacterial ribosomal protein bL36 family.

The polypeptide is Large ribosomal subunit protein bL36 (Janthinobacterium sp. (strain Marseille) (Minibacterium massiliensis)).